The sequence spans 158 residues: Glutathione peroxidase homolog BsaA (158 aa).

The active site involves threonine 36.

The protein belongs to the glutathione peroxidase family.

The polypeptide is Glutathione peroxidase homolog BsaA (bsaA) (Staphylococcus epidermidis (strain ATCC 35984 / DSM 28319 / BCRC 17069 / CCUG 31568 / BM 3577 / RP62A)).